The following is a 114-amino-acid chain: Prefoldin subunit 6 (114 aa).

Ser-2 bears the N-acetylserine mark.

Belongs to the prefoldin subunit beta family. Heterohexamer of two PFD-alpha type and four PFD-beta type subunits.

The protein resides in the nucleus. In terms of biological role, binds specifically to cytosolic chaperonin (c-CPN) and transfers target proteins to it. Binds to nascent polypeptide chain and promotes folding in an environment in which there are many competing pathways for nonnative proteins. The chain is Prefoldin subunit 6 (YKE2) from Saccharomyces cerevisiae (strain ATCC 204508 / S288c) (Baker's yeast).